Reading from the N-terminus, the 457-residue chain is RNA-binding suppressor of PAS kinase protein 1 (457 aa).

An R3H domain is found at Arg26–Asn88. Disordered regions lie at residues Ile142–Glu181, Leu195–Tyr291, and Phe406–Ile457. Positions Asn145 to Asn158 are enriched in polar residues. A compositionally biased stretch (basic and acidic residues) spans Lys159–Glu181. Residue Ser198 is modified to Phosphoserine. Over residues Ser226–Thr247 the composition is skewed to low complexity. A compositionally biased stretch (polar residues) spans Ile248–Tyr258. The span at Lys418–Ser435 shows a compositional bias: basic and acidic residues. 3 positions are modified to phosphoserine: Ser435, Ser439, and Ser447. The segment covering Arg443–Ile457 has biased composition (basic and acidic residues).

It localises to the cytoplasm. This is RNA-binding suppressor of PAS kinase protein 1 (RBS1) from Saccharomyces cerevisiae (strain ATCC 204508 / S288c) (Baker's yeast).